The following is a 122-amino-acid chain: Small ribosomal subunit protein uS13 (122 aa).

The disordered stretch occupies residues 93–122; sequence RRGLPVRGQKTKTNARTRKGPKKTIANKKK.

This sequence belongs to the universal ribosomal protein uS13 family. Part of the 30S ribosomal subunit. Forms a loose heterodimer with protein S19. Forms two bridges to the 50S subunit in the 70S ribosome.

In terms of biological role, located at the top of the head of the 30S subunit, it contacts several helices of the 16S rRNA. In the 70S ribosome it contacts the 23S rRNA (bridge B1a) and protein L5 of the 50S subunit (bridge B1b), connecting the 2 subunits; these bridges are implicated in subunit movement. Contacts the tRNAs in the A and P-sites. The chain is Small ribosomal subunit protein uS13 from Clostridium beijerinckii (strain ATCC 51743 / NCIMB 8052) (Clostridium acetobutylicum).